The sequence spans 108 residues: Nucleoid-associated protein BQ02190 (108 aa).

It belongs to the YbaB/EbfC family. As to quaternary structure, homodimer.

It is found in the cytoplasm. It localises to the nucleoid. Binds to DNA and alters its conformation. May be involved in regulation of gene expression, nucleoid organization and DNA protection. The protein is Nucleoid-associated protein BQ02190 of Bartonella quintana (strain Toulouse) (Rochalimaea quintana).